The sequence spans 92 residues: C-C motif chemokine 3 (92 aa).

The signal sequence occupies residues 1–23; sequence MKVSTTALAVLLCTMTLCNQVFS. Intrachain disulfides connect Cys34-Cys57 and Cys35-Cys73.

This sequence belongs to the intercrine beta (chemokine CC) family. Self-associates. Also heterodimer of MIP-1-alpha(4-69) and MIP-1-beta(3-69). Interacts with CCR1. Expressed in lung, spleen, and pancreas.

The protein resides in the secreted. Monokine with inflammatory and chemokinetic properties. Binds to CCR1, CCR4 and CCR5. One of the major HIV-suppressive factors produced by CD8+ T-cells. Recombinant MIP-1-alpha induces a dose-dependent inhibition of different strains of HIV-1, HIV-2, and simian immunodeficiency virus (SIV). In Mus musculus (Mouse), this protein is C-C motif chemokine 3 (Ccl3).